The sequence spans 272 residues: Acyl-[acyl-carrier-protein]--UDP-N-acetylglucosamine O-acyltransferase (272 aa).

This sequence belongs to the transferase hexapeptide repeat family. LpxA subfamily. Homotrimer.

The protein resides in the cytoplasm. It catalyses the reaction a (3R)-hydroxyacyl-[ACP] + UDP-N-acetyl-alpha-D-glucosamine = a UDP-3-O-[(3R)-3-hydroxyacyl]-N-acetyl-alpha-D-glucosamine + holo-[ACP]. Its pathway is glycolipid biosynthesis; lipid IV(A) biosynthesis; lipid IV(A) from (3R)-3-hydroxytetradecanoyl-[acyl-carrier-protein] and UDP-N-acetyl-alpha-D-glucosamine: step 1/6. Its function is as follows. Involved in the biosynthesis of lipid A, a phosphorylated glycolipid that anchors the lipopolysaccharide to the outer membrane of the cell. The sequence is that of Acyl-[acyl-carrier-protein]--UDP-N-acetylglucosamine O-acyltransferase from Rhizobium etli (strain ATCC 51251 / DSM 11541 / JCM 21823 / NBRC 15573 / CFN 42).